The sequence spans 206 residues: Ribosomal RNA large subunit methyltransferase E (206 aa).

Glycine 60, tryptophan 62, aspartate 80, aspartate 96, and aspartate 121 together coordinate S-adenosyl-L-methionine. Lysine 161 (proton acceptor) is an active-site residue.

The protein belongs to the class I-like SAM-binding methyltransferase superfamily. RNA methyltransferase RlmE family.

The protein resides in the cytoplasm. It carries out the reaction uridine(2552) in 23S rRNA + S-adenosyl-L-methionine = 2'-O-methyluridine(2552) in 23S rRNA + S-adenosyl-L-homocysteine + H(+). Its function is as follows. Specifically methylates the uridine in position 2552 of 23S rRNA at the 2'-O position of the ribose in the fully assembled 50S ribosomal subunit. This Nitrosomonas eutropha (strain DSM 101675 / C91 / Nm57) protein is Ribosomal RNA large subunit methyltransferase E.